Consider the following 122-residue polypeptide: Large ribosomal subunit protein uL14 (122 aa).

The protein belongs to the universal ribosomal protein uL14 family. In terms of assembly, part of the 50S ribosomal subunit. Forms a cluster with proteins L3 and L19. In the 70S ribosome, L14 and L19 interact and together make contacts with the 16S rRNA in bridges B5 and B8.

Functionally, binds to 23S rRNA. Forms part of two intersubunit bridges in the 70S ribosome. The chain is Large ribosomal subunit protein uL14 from Mycobacteroides abscessus (strain ATCC 19977 / DSM 44196 / CCUG 20993 / CIP 104536 / JCM 13569 / NCTC 13031 / TMC 1543 / L948) (Mycobacterium abscessus).